The sequence spans 151 residues: Endoribonuclease YbeY (151 aa).

Histidine 114, histidine 118, and histidine 124 together coordinate Zn(2+).

Belongs to the endoribonuclease YbeY family. Zn(2+) is required as a cofactor.

It localises to the cytoplasm. Its function is as follows. Single strand-specific metallo-endoribonuclease involved in late-stage 70S ribosome quality control and in maturation of the 3' terminus of the 16S rRNA. The chain is Endoribonuclease YbeY from Hamiltonella defensa subsp. Acyrthosiphon pisum (strain 5AT).